Consider the following 382-residue polypeptide: Apolipoprotein A-IV (382 aa).

An N-terminal signal peptide occupies residues 1 to 20 (MFLRAVVLTLALVAVTGARA). A run of 13 repeats spans residues 33-54 (DYFS…QSEL), 60-81 (ALFQ…KKLV), 82-103 (PFAT…EEIR), 115-136 (PHAN…QRLG), 137-158 (PYAD…RHLT), 159-180 (SHAQ…SSLT), 181-202 (PYAD…GHLT), 203-224 (PYAD…RSLA), 225-246 (PYAQ…FQMK), 247-268 (KNAE…QRLA), 269-286 (PVVE…KGLQ), 287-308 (ESLA…HNMG), and 309-330 (PYGD…QKLG). The interval 33 to 330 (DYFSQLSNNA…QVEELRQKLG (298 aa)) is 13 X 22 AA approximate tandem repeats. Positions 362 to 382 (ENQDMPLALPEQEQAPGPLES) are disordered.

Belongs to the apolipoprotein A1/A4/E family. Homodimer.

The protein localises to the secreted. Functionally, may have a role in chylomicrons and VLDL secretion and catabolism. Required for efficient activation of lipoprotein lipase by ApoC-II; potent activator of LCAT. Apoa-IV is a major component of HDL and chylomicrons. This chain is Apolipoprotein A-IV (APOA4), found in Acinonyx jubatus (Cheetah).